We begin with the raw amino-acid sequence, 115 residues long: NADH-ubiquinone oxidoreductase chain 3 (115 aa).

The next 3 helical transmembrane spans lie at 3 to 23 (LMLT…IAFW), 55 to 75 (FFLV…LLPL), and 84 to 104 (LNTM…SLAY).

It belongs to the complex I subunit 3 family. Core subunit of respiratory chain NADH dehydrogenase (Complex I) which is composed of 45 different subunits. Interacts with TMEM186. Interacts with TMEM242.

It is found in the mitochondrion inner membrane. The enzyme catalyses a ubiquinone + NADH + 5 H(+)(in) = a ubiquinol + NAD(+) + 4 H(+)(out). Core subunit of the mitochondrial membrane respiratory chain NADH dehydrogenase (Complex I) which catalyzes electron transfer from NADH through the respiratory chain, using ubiquinone as an electron acceptor. Essential for the catalytic activity of complex I. This chain is NADH-ubiquinone oxidoreductase chain 3, found in Equus caballus (Horse).